Reading from the N-terminus, the 142-residue chain is AP-2 complex subunit sigma (142 aa).

Belongs to the adaptor complexes small subunit family. In terms of assembly, adaptor protein complex 2 (AP-2) is a heterotetramer composed of two large adaptins (alpha-type and beta-type subunits), a medium adaptin (mu-type subunit) and a small adaptin (sigma-type subunit).

Its subcellular location is the cell membrane. It localises to the membrane. The protein resides in the coated pit. Subunit of the adaptor protein complex 2 (AP-2). Adaptor protein complexes function in protein transport via transport vesicles in different membrane traffic pathways. Adaptor protein complexes are vesicle coat components and appear to be involved in cargo selection and vesicle formation. AP-2 is involved in clathrin-dependent endocytosis in which cargo proteins are incorporated into vesicles surrounded by clathrin (clathrin-coated vesicles, CCVs) which are destined for fusion with the early endosome. The complex binds polyphosphoinositides. This is AP-2 complex subunit sigma (AP17) from Arabidopsis thaliana (Mouse-ear cress).